Consider the following 314-residue polypeptide: Taste receptor type 2 member 42 (314 aa).

At 1 to 7 (MPTELDK) the chain is on the extracellular side. Residues 8–28 (IFLILAIVEFIIGLLGNVFIG) traverse the membrane as a helical segment. Residues 29-50 (LVNCSEGIKNQKVFSADFILTC) lie on the Cytoplasmic side of the membrane. Residues 51–71 (LAISTIGQLLVILFDSFLVGL) traverse the membrane as a helical segment. Over 72 to 101 (ASHLYTTYRLGKLVILLWHMTNHLTTWLAT) the chain is Extracellular. The helical transmembrane segment at 102–122 (CLSIFYFFKIAHFPHSLFLWL) threads the bilayer. At 123–127 (RWRMN) the chain is on the cytoplasmic side. Residues 128–148 (GMIVMLRTLSLFLLIFDSLVL) traverse the membrane as a helical segment. At 149–187 (KLFIDISLNIIDKSNLTLYFDESKTLYDKLSILKTLLSL) the chain is on the extracellular side. The N-linked (GlcNAc...) asparagine glycan is linked to asparagine 163. The chain crosses the membrane as a helical span at residues 188 to 208 (TSFIPFSLSLTSLLFLFLSLV). The Cytoplasmic segment spans residues 209–238 (RHTRNLKLSSLGSRDSSTEAHRRAMKMVMS). The chain crosses the membrane as a helical span at residues 239–259 (FLFLFIVHFFSLQVANWIFFM). Topologically, residues 260–265 (SWNNKY) are extracellular. A helical membrane pass occupies residues 266–286 (IKFVMLALNAFPSCHSFILIL). Residues 287-314 (GNSKLRQTAVRLLSHLRNYTKTSNPLPL) lie on the Cytoplasmic side of the membrane.

It belongs to the G-protein coupled receptor T2R family.

The protein localises to the membrane. Receptor that may play a role in the perception of bitterness and is gustducin-linked. May play a role in sensing the chemical composition of the gastrointestinal content. The activity of this receptor may stimulate alpha gustducin, mediate PLC-beta-2 activation and lead to the gating of TRPM5. This Pongo pygmaeus (Bornean orangutan) protein is Taste receptor type 2 member 42 (TAS2R42).